The primary structure comprises 509 residues: Maturase K (509 aa).

It belongs to the intron maturase 2 family. MatK subfamily.

The protein localises to the plastid. It is found in the chloroplast. Its function is as follows. Usually encoded in the trnK tRNA gene intron. Probably assists in splicing its own and other chloroplast group II introns. The protein is Maturase K of Schlumbergera truncata (Thanksgiving cactus).